A 657-amino-acid chain; its full sequence is Threonine--tRNA ligase (657 aa).

The region spanning 7–70 is the TGS domain; sequence QQASIAITLP…LCDANIEIVT (64 aa). Residues 253–555 are catalytic; the sequence is DHRKLGTELE…LIEHTAGNFP (303 aa). Residues Cys-351, His-402, and His-532 each contribute to the Zn(2+) site.

Belongs to the class-II aminoacyl-tRNA synthetase family. In terms of assembly, homodimer. It depends on Zn(2+) as a cofactor.

The protein resides in the cytoplasm. The enzyme catalyses tRNA(Thr) + L-threonine + ATP = L-threonyl-tRNA(Thr) + AMP + diphosphate + H(+). Catalyzes the attachment of threonine to tRNA(Thr) in a two-step reaction: L-threonine is first activated by ATP to form Thr-AMP and then transferred to the acceptor end of tRNA(Thr). Also edits incorrectly charged L-seryl-tRNA(Thr). The sequence is that of Threonine--tRNA ligase from Chlorobium limicola (strain DSM 245 / NBRC 103803 / 6330).